The following is a 422-amino-acid chain: Dioxygenase str8 (422 aa).

Residues Cys73, Cys75, Cys78, and His119 each coordinate Zn(2+). Fe cation-binding residues include His243, Asp245, and His382.

It belongs to the gamma-BBH/TMLD family. Requires Fe(2+) as cofactor.

It functions in the pathway mycotoxin biosynthesis. Its function is as follows. Dioxygenase; part of the gene cluster that mediates the biosynthesis of strobilurin A, an antifungal polyketide that contains a key beta-methoxyacrylate toxophore that targets the complex III of the mitochondrial electron transport chain. Strobilurin biosynthesis begins with construction of benzoyl CoA by step-wise elimination of ammonia from phenylalanine by the phenylalanine ammonia-lyase str11, oxygenation by str8 and retro-Claisen reaction to form benzoic acid, which is activated to its CoA thiolester benzoyl CoA by the dedicated CoA ligase str10. Benzoyl CoA forms the starter unit for the highly reducing polyketide synthase stpks1 that produces the polyketide prestrobilutin A. The FAD-dependent oxygenase str9 then catalyzes the key oxidative rearrangement responsible for the creation of the beta-methoxyacrylate toxophore. Str9 performs epoxidation of the 2,3 olefin of prestrobilutin A, followed by Meinwald rearrangement to furnish the aldehyde intermediate. Rapid enolization of the aldehyde intermediate would give the beta-methoxyacrylate skeleton and methylations catalyzed by str2 and str3 complete the synthesis and lead to the production of strobilurin A. The short-chain dehydrogenase stl2 and the dehydrogenase str4 play a role in the shunt pathway leading to the production of bolineol. The cluster encodes no obvious halogenase gene that could be involved in production of strobilurin B, nor any obvious dimethylallyl-transferase that could be involved in the production of strobilurin G. It is possible that unknown proteins encoded in, or near, the cluster (such as str1 or stl1) may form new classes of halogenases or dimethylally-transferases, or that the responsible genes are located elsewhere on the genome. Similarly, proteins encoded by str5/str6 hydrolases appear to have no chemical role in the biosynthesis of strobilurin A. Finally, no obvious self-resistance gene is found within the cluster. The chain is Dioxygenase str8 from Strobilurus tenacellus.